Here is a 341-residue protein sequence, read N- to C-terminus: Protein pelota homolog (341 aa).

This sequence belongs to the eukaryotic release factor 1 family. Pelota subfamily. As to quaternary structure, monomer. Requires a divalent metal cation as cofactor.

It localises to the cytoplasm. In terms of biological role, may function in recognizing stalled ribosomes, interact with stem-loop structures in stalled mRNA molecules, and effect endonucleolytic cleavage of the mRNA. May play a role in the release non-functional ribosomes and degradation of damaged mRNAs. Has endoribonuclease activity. This Sulfurisphaera tokodaii (strain DSM 16993 / JCM 10545 / NBRC 100140 / 7) (Sulfolobus tokodaii) protein is Protein pelota homolog.